A 355-amino-acid polypeptide reads, in one-letter code: C-C chemokine receptor type 8 (355 aa).

The Extracellular portion of the chain corresponds to 1–35 (MDYTLDLSVTTVTDYYYPDIFSSPCDAELIQTNGK). The helical transmembrane segment at 36-63 (LLLAVFYCLLFVFSLLGNSLVILVLVVC) threads the bilayer. Topologically, residues 64-73 (KKLRSITDVY) are cytoplasmic. A helical membrane pass occupies residues 74–93 (LLNLALSDLLFVFSFPFQTY). The Extracellular segment spans residues 94-107 (YLLDQWVFGTVMCK). A disulfide bond links Cys106 and Cys183. Residues 108–129 (VVSGFYYIGFYSSMFFITLMSV) traverse the membrane as a helical segment. The Cytoplasmic segment spans residues 130-146 (DRYLAVVHAVYALKVRT). A helical transmembrane segment spans residues 147–171 (IRMGTTLCLAVWLTAIMATIPLLVF). Topologically, residues 172 to 202 (YQVASEDGVLQCYSFYNQQTLKWKIFTNFKM) are extracellular. A helical transmembrane segment spans residues 203 to 222 (NILGLLIPFTIFMFCYIKIL). The Cytoplasmic portion of the chain corresponds to 223 to 238 (HQLKRCQNHNKTKAIR). The chain crosses the membrane as a helical span at residues 239–263 (LVLIVVIASLLFWVPFNVVLFLTSL). Residues 264 to 280 (HSMHILDGCSISQQLTY) lie on the Extracellular side of the membrane. Residues 281–304 (ATHVTEIISFTHCCVNPVIYAFVG) form a helical membrane-spanning segment. Topologically, residues 305–355 (EKFKKHLSEIFQKSCSQIFNYLGRQMPRESCEKSSSCQQHSSRSSSVDYIL) are cytoplasmic.

The protein belongs to the G-protein coupled receptor 1 family.

It localises to the cell membrane. Receptor for the chemokine CCL1/SCYA1/I-309. May regulate monocyte chemotaxis and thymic cell line apoptosis. Alternative coreceptor with CD4 for HIV-1 infection. This Homo sapiens (Human) protein is C-C chemokine receptor type 8 (CCR8).